A 380-amino-acid chain; its full sequence is MITVNEGSVTIRVPDFSKVSARAPVFYNPAMEFNRDVSVVALQVFQRLLGGEISVADTFSGSGIRAIRYLVEVEGVSEAFANDINPLAVECIKNNSVINSVSPEVSREDASIFLRSNHGRFDVIDIDPFGTPAPFMDSAAASARNNSLLAVTATDTSSLCGTYIKPCLRKYSSRPLKTEYCHETGLRILAGFTAMNLARYRKAASVLLSHSSQHYMRLYIRVRRGARRADESIRNIGFMLHCFRCLHHEHVNGFAPLKRECPHCGAEMDVAGPLWVGDIQDSKFIGEMIGEVENKELNTAGDVLKLLKGCLDEAGMPPGFYDIHEVCSKLGRSAPPLRDVMDGLEAAGFRVSRTHIRPTGIRTDAGIGEIEEVLAGLMPE.

The Trm1 methyltransferase domain maps to 2–374; sequence ITVNEGSVTI…AGIGEIEEVL (373 aa). S-adenosyl-L-methionine contacts are provided by Arg-35, Arg-65, Asp-83, Asp-109, and Ala-110. Zn(2+) contacts are provided by Cys-242, Cys-245, Cys-261, and Cys-264.

The protein belongs to the class I-like SAM-binding methyltransferase superfamily. Trm1 family.

The catalysed reaction is guanosine(26) in tRNA + 2 S-adenosyl-L-methionine = N(2)-dimethylguanosine(26) in tRNA + 2 S-adenosyl-L-homocysteine + 2 H(+). In terms of biological role, dimethylates a single guanine residue at position 26 of a number of tRNAs using S-adenosyl-L-methionine as donor of the methyl groups. In Methanothermobacter thermautotrophicus (strain ATCC 29096 / DSM 1053 / JCM 10044 / NBRC 100330 / Delta H) (Methanobacterium thermoautotrophicum), this protein is tRNA (guanine(26)-N(2))-dimethyltransferase.